Reading from the N-terminus, the 326-residue chain is F-box/LRR-repeat protein 12 (326 aa).

The region spanning 1–47 is the F-box domain; it reads MATFADLPDSVLLEIFSYLPVRDRIRISRVCHHWKKLVDDRWLWRHV. LRR repeat units follow at residues 51–78, 86–111, 161–185, 186–211, 212–236, 237–261, and 266–291; these read LYTMRPKVMWHLLRRYMASRLHSLRMGG, APQLSPALMRALGQKCPNLKRLCLHV, VPAFRDEHLQGLTRFRALRSLVLGG, TYRVTETGLDMGLQELNYLQRLEVLG, CTLSADSTLLAISRHLRDVRKIRLT, VRGLSAPGLSVLEGMPALESLCLLG, and PEMPSPQEILASCLTMPKLRVLELQG.

As to quaternary structure, interacts with SKP1 and CUL1.

The protein operates within protein modification; protein ubiquitination. In terms of biological role, substrate-recognition component of the SCF (SKP1-CUL1-F-box protein)-type E3 ubiquitin ligase complex. Mediates the polyubiquitination and proteasomal degradation of CAMK1 leading to disruption of cyclin D1/CDK4 complex assembly which results in G1 cell cycle arrest in lung epithelia. The polypeptide is F-box/LRR-repeat protein 12 (FBXL12) (Bos taurus (Bovine)).